A 909-amino-acid chain; its full sequence is NADH-quinone oxidoreductase subunit G (909 aa).

Residues 1–83 (MATIYVDGKE…GTYISIEDEE (83 aa)) enclose the 2Fe-2S ferredoxin-type domain. Positions 34, 45, 48, and 67 each coordinate [2Fe-2S] cluster. The 40-residue stretch at 83–122 (EAKEFRKCVVEWQMTNHPHDCPVCEEGGACHLQDMTVMTG) folds into the 4Fe-4S His(Cys)3-ligated-type domain. Histidine 99, cysteine 103, cysteine 106, cysteine 112, cysteine 151, cysteine 154, cysteine 157, cysteine 201, cysteine 228, cysteine 231, cysteine 235, and cysteine 263 together coordinate [4Fe-4S] cluster. The 4Fe-4S Mo/W bis-MGD-type domain maps to 221-277 (MQFAPSICQQCSVGCNISPGERYGELRRIENRFHGSVNHYFLCDRGRFGYGYVNLPD).

It belongs to the complex I 75 kDa subunit family. Composed of 13 different subunits. Subunits NuoCD, E, F, and G constitute the peripheral sector of the complex. [2Fe-2S] cluster serves as cofactor. Requires [4Fe-4S] cluster as cofactor.

It catalyses the reaction a quinone + NADH + 5 H(+)(in) = a quinol + NAD(+) + 4 H(+)(out). Its function is as follows. NDH-1 shuttles electrons from NADH, via FMN and iron-sulfur (Fe-S) centers, to quinones in the respiratory chain. The immediate electron acceptor for the enzyme in this species is believed to be ubiquinone. Couples the redox reaction to proton translocation (for every two electrons transferred, four hydrogen ions are translocated across the cytoplasmic membrane), and thus conserves the redox energy in a proton gradient. This Shewanella oneidensis (strain ATCC 700550 / JCM 31522 / CIP 106686 / LMG 19005 / NCIMB 14063 / MR-1) protein is NADH-quinone oxidoreductase subunit G (nuoG).